The primary structure comprises 284 residues: 2-dehydro-3-deoxyphosphooctonate aldolase (284 aa).

The protein belongs to the KdsA family.

The protein localises to the cytoplasm. The enzyme catalyses D-arabinose 5-phosphate + phosphoenolpyruvate + H2O = 3-deoxy-alpha-D-manno-2-octulosonate-8-phosphate + phosphate. Its pathway is carbohydrate biosynthesis; 3-deoxy-D-manno-octulosonate biosynthesis; 3-deoxy-D-manno-octulosonate from D-ribulose 5-phosphate: step 2/3. The protein operates within bacterial outer membrane biogenesis; lipopolysaccharide biosynthesis. In Burkholderia cenocepacia (strain ATCC BAA-245 / DSM 16553 / LMG 16656 / NCTC 13227 / J2315 / CF5610) (Burkholderia cepacia (strain J2315)), this protein is 2-dehydro-3-deoxyphosphooctonate aldolase.